Consider the following 241-residue polypeptide: Endonuclease NucS (241 aa).

The protein belongs to the NucS endonuclease family.

Its subcellular location is the cytoplasm. Its function is as follows. Cleaves both 3' and 5' ssDNA extremities of branched DNA structures. The polypeptide is Endonuclease NucS (Corynebacterium jeikeium (strain K411)).